Consider the following 422-residue polypeptide: Glucose-1-phosphate adenylyltransferase (422 aa).

Residues Tyr-108, Gly-173, 188–189, and Ser-206 contribute to the alpha-D-glucose 1-phosphate site; that span reads EK.

Belongs to the bacterial/plant glucose-1-phosphate adenylyltransferase family. Homotetramer.

It carries out the reaction alpha-D-glucose 1-phosphate + ATP + H(+) = ADP-alpha-D-glucose + diphosphate. Its pathway is glycan biosynthesis; glycogen biosynthesis. Its function is as follows. Involved in the biosynthesis of ADP-glucose, a building block required for the elongation reactions to produce glycogen. Catalyzes the reaction between ATP and alpha-D-glucose 1-phosphate (G1P) to produce pyrophosphate and ADP-Glc. This Paraburkholderia phymatum (strain DSM 17167 / CIP 108236 / LMG 21445 / STM815) (Burkholderia phymatum) protein is Glucose-1-phosphate adenylyltransferase.